Consider the following 331-residue polypeptide: Fructose-1,6-bisphosphatase class 1 2 (331 aa).

Positions 80, 98, 100, and 101 each coordinate Mg(2+). Residues 101 to 104 and Asn-189 each bind substrate; that span reads DGSS. Glu-261 is a Mg(2+) binding site.

The protein belongs to the FBPase class 1 family. Homotetramer. Mg(2+) is required as a cofactor.

It localises to the cytoplasm. It carries out the reaction beta-D-fructose 1,6-bisphosphate + H2O = beta-D-fructose 6-phosphate + phosphate. It participates in carbohydrate biosynthesis; Calvin cycle. This is Fructose-1,6-bisphosphatase class 1 2 from Cereibacter sphaeroides (strain ATCC 17029 / ATH 2.4.9) (Rhodobacter sphaeroides).